A 289-amino-acid chain; its full sequence is Pyridoxal kinase PdxY (289 aa).

Residues Ser-9 and 44–45 (TQ) each bind substrate. Residues Asp-112, Ala-144, Glu-149, Lys-183, and 210–213 (RPLV) contribute to the ATP site. Asp-225 is a binding site for substrate.

This sequence belongs to the pyridoxine kinase family. PdxY subfamily. In terms of assembly, homodimer. Mg(2+) is required as a cofactor.

The catalysed reaction is pyridoxal + ATP = pyridoxal 5'-phosphate + ADP + H(+). Its pathway is cofactor metabolism; pyridoxal 5'-phosphate salvage; pyridoxal 5'-phosphate from pyridoxal: step 1/1. In terms of biological role, pyridoxal kinase involved in the salvage pathway of pyridoxal 5'-phosphate (PLP). Catalyzes the phosphorylation of pyridoxal to PLP. The sequence is that of Pyridoxal kinase PdxY from Proteus mirabilis.